The primary structure comprises 304 residues: Large ribosomal subunit protein uL2m (304 aa).

A mitochondrion-targeting transit peptide spans 1–60 (MALCALASALRSLSLASPAITARVPTLLPVGQSNVLLQLPSALALPAHRPVHMSADRSAK).

It belongs to the universal ribosomal protein uL2 family. As to quaternary structure, component of the mitochondrial ribosome large subunit (39S) which comprises a 16S rRNA and about 50 distinct proteins.

The protein resides in the mitochondrion. This is Large ribosomal subunit protein uL2m (Mrpl2) from Rattus norvegicus (Rat).